We begin with the raw amino-acid sequence, 213 residues long: Thymidylate kinase (213 aa).

9 to 16 (GVEGCGKT) contacts ATP.

This sequence belongs to the thymidylate kinase family.

The catalysed reaction is dTMP + ATP = dTDP + ADP. Functionally, phosphorylation of dTMP to form dTDP in both de novo and salvage pathways of dTTP synthesis. This Geotalea uraniireducens (strain Rf4) (Geobacter uraniireducens) protein is Thymidylate kinase.